Consider the following 632-residue polypeptide: DNA mismatch repair protein MutL (632 aa).

The protein belongs to the DNA mismatch repair MutL/HexB family.

Its function is as follows. This protein is involved in the repair of mismatches in DNA. It is required for dam-dependent methyl-directed DNA mismatch repair. May act as a 'molecular matchmaker', a protein that promotes the formation of a stable complex between two or more DNA-binding proteins in an ATP-dependent manner without itself being part of a final effector complex. This is DNA mismatch repair protein MutL from Pseudomonas putida (strain GB-1).